The primary structure comprises 91 residues: Non-specific lipid-transfer protein 1 (91 aa).

4 disulfides stabilise this stretch: Cys-3/Cys-50, Cys-13/Cys-27, Cys-28/Cys-73, and Cys-48/Cys-87. Residues Arg-44 and Tyr-79 each coordinate a 1,2-diacyl-sn-glycero-3-phosphocholine.

Monomer.

In terms of biological role, plant non-specific lipid-transfer proteins transfer phospholipids as well as galactolipids across membranes. May play a role in wax or cutin deposition in the cell walls of expanding epidermal cells and certain secretory tissues. Has antifungal activity against F.solani, F.oxysporum, P.aphanidermatum and S.rolfsii. Has antibacterial activity against the Gram-positive bacterium S.aureus but not against the Gram-negative bacterium S.typhimurium. This Vigna radiata var. radiata (Mung bean) protein is Non-specific lipid-transfer protein 1.